A 483-amino-acid polypeptide reads, in one-letter code: tRNA sulfurtransferase (483 aa).

The THUMP domain maps to 61–165 (EAVCDALTRI…DDKLILVNAR (105 aa)). ATP-binding positions include 183-184 (LI), Lys265, Gly287, and Gln296. Residues Cys344 and Cys456 are joined by a disulfide bond. One can recognise a Rhodanese domain in the interval 404 to 483 (FATNDVVLDI…FNNVKVYRKK (80 aa)). The active-site Cysteine persulfide intermediate is Cys456.

This sequence belongs to the ThiI family.

It localises to the cytoplasm. The enzyme catalyses [ThiI sulfur-carrier protein]-S-sulfanyl-L-cysteine + a uridine in tRNA + 2 reduced [2Fe-2S]-[ferredoxin] + ATP + H(+) = [ThiI sulfur-carrier protein]-L-cysteine + a 4-thiouridine in tRNA + 2 oxidized [2Fe-2S]-[ferredoxin] + AMP + diphosphate. The catalysed reaction is [ThiS sulfur-carrier protein]-C-terminal Gly-Gly-AMP + S-sulfanyl-L-cysteinyl-[cysteine desulfurase] + AH2 = [ThiS sulfur-carrier protein]-C-terminal-Gly-aminoethanethioate + L-cysteinyl-[cysteine desulfurase] + A + AMP + 2 H(+). It functions in the pathway cofactor biosynthesis; thiamine diphosphate biosynthesis. Functionally, catalyzes the ATP-dependent transfer of a sulfur to tRNA to produce 4-thiouridine in position 8 of tRNAs, which functions as a near-UV photosensor. Also catalyzes the transfer of sulfur to the sulfur carrier protein ThiS, forming ThiS-thiocarboxylate. This is a step in the synthesis of thiazole, in the thiamine biosynthesis pathway. The sulfur is donated as persulfide by IscS. In Proteus mirabilis (strain HI4320), this protein is tRNA sulfurtransferase.